Consider the following 105-residue polypeptide: Large ribosomal subunit protein uL24 (105 aa).

Belongs to the universal ribosomal protein uL24 family. In terms of assembly, part of the 50S ribosomal subunit.

One of two assembly initiator proteins, it binds directly to the 5'-end of the 23S rRNA, where it nucleates assembly of the 50S subunit. Functionally, one of the proteins that surrounds the polypeptide exit tunnel on the outside of the subunit. This is Large ribosomal subunit protein uL24 from Francisella philomiragia subsp. philomiragia (strain ATCC 25017 / CCUG 19701 / FSC 153 / O#319-036).